The primary structure comprises 213 residues: Probable GH family 25 lysozyme 4 (213 aa).

A signal peptide spans 1–19; that stretch reads MRLFLLLITFIALFGAINA. The Ch-type lysozyme domain occupies 21–213; sequence SGVDISQGSS…VGYDFNWYPN (193 aa). Catalysis depends on residues Asp24, Asp112, and Glu114.

The protein belongs to the glycosyl hydrolase 25 family.

It localises to the secreted. It carries out the reaction Hydrolysis of (1-&gt;4)-beta-linkages between N-acetylmuramic acid and N-acetyl-D-glucosamine residues in a peptidoglycan and between N-acetyl-D-glucosamine residues in chitodextrins.. In Dictyostelium discoideum (Social amoeba), this protein is Probable GH family 25 lysozyme 4.